We begin with the raw amino-acid sequence, 68 residues long: Large ribosomal subunit protein bL31 (68 aa).

Cys16, Cys18, Cys37, and Cys40 together coordinate Zn(2+).

The protein belongs to the bacterial ribosomal protein bL31 family. Type A subfamily. Part of the 50S ribosomal subunit. The cofactor is Zn(2+).

Binds the 23S rRNA. In Nitrosococcus oceani (strain ATCC 19707 / BCRC 17464 / JCM 30415 / NCIMB 11848 / C-107), this protein is Large ribosomal subunit protein bL31.